The chain runs to 284 residues: Tropomyosin (284 aa).

Positions Met1–Tyr284 form a coiled coil. Residues Thr111–Glu131 form a disordered region.

Belongs to the tropomyosin family. In terms of assembly, homodimer.

Its function is as follows. Tropomyosin, in association with the troponin complex, plays a central role in the calcium dependent regulation of muscle contraction. This chain is Tropomyosin, found in Schistosoma japonicum (Blood fluke).